Reading from the N-terminus, the 462-residue chain is Cytochrome P450 20A1 (462 aa).

A helical transmembrane segment spans residues 4–24; the sequence is FAIFAVTFLLALVGAVLYLYP. Heme is bound at residue Cys-409.

It belongs to the cytochrome P450 family. Requires heme as cofactor.

Its subcellular location is the membrane. The protein is Cytochrome P450 20A1 (CYP20A1) of Homo sapiens (Human).